We begin with the raw amino-acid sequence, 461 residues long: Carbamoyl phosphate synthase arginine-specific small chain (461 aa).

The region spanning 240 to 427 is the Glutamine amidotransferase type-1 domain; that stretch reads HVALIDCGVK…LENVQMYKDN (188 aa). Catalysis depends on Cys-316, which acts as the Nucleophile. Active-site residues include His-400 and Glu-402.

This sequence belongs to the CarA family. Heterodimer composed of 2 chains; the small (or glutamine) chain promotes the hydrolysis of glutamine to ammonia, which is used by the large (or ammonia) chain to synthesize carbamoyl phosphate.

The protein resides in the cytoplasm. The enzyme catalyses hydrogencarbonate + L-glutamine + 2 ATP + H2O = carbamoyl phosphate + L-glutamate + 2 ADP + phosphate + 2 H(+). It carries out the reaction L-glutamine + H2O = L-glutamate + NH4(+). It participates in amino-acid biosynthesis; L-arginine biosynthesis; carbamoyl phosphate from bicarbonate: step 1/1. Small subunit of the arginine-specific carbamoyl phosphate synthase (CPSase). CPSase catalyzes the formation of carbamoyl phosphate from the ammonia moiety of glutamine, carbonate, and phosphate donated by ATP, constituting the first step of 2 biosynthetic pathways, one leading to arginine and/or urea and the other to pyrimidine nucleotides. The small subunit (glutamine amidotransferase) binds and cleaves glutamine to supply the large subunit with the substrate ammonia. The chain is Carbamoyl phosphate synthase arginine-specific small chain (CPA1) from Chaetomium globosum (strain ATCC 6205 / CBS 148.51 / DSM 1962 / NBRC 6347 / NRRL 1970) (Soil fungus).